Reading from the N-terminus, the 53-residue chain is Minor histocompatibility protein HMSD variant form (53 aa).

In terms of assembly, ACC-6 forms a complex with MHC HLA-B*4403. In terms of tissue distribution, highly expressed in dendritic cells and primary leukemia cells, especially those of myeloid lineage. ACC-6 expression is limited to cells of the hematopoietic lineage.

Functionally, this splice variant of HMSD is the precursor of the histocompatibility antigen ACC-6. More generally, minor histocompatibility antigens (mHags) refer to immunogenic peptide which, when complexed with MHC, can generate an immune response after recognition by specific T-cells. The peptides are derived from polymorphic intracellular proteins, which are cleaved by normal pathways of antigen processing. The binding of these peptides to MHC class I or class II molecules and its expression on the cell surface can stimulate T-cell responses and thereby trigger graft rejection or graft-versus-host disease (GVHD) after hematopoietic stem cell transplantation from HLA-identical sibling donor. GVHD is a frequent complication after bone marrow transplantation (BMT), due to mismatch of minor histocompatibility antigen in HLA-matched sibling marrow transplants. However, associated with GVHD, a favorable graft-versus-leukemia (GVL) can be induced by donor-recipient disparities in mHags. ACC-6 is presented to the cell surface by MHC HLA-B*4403. This complex specifically elicits donor-cytotoxic T-lymphocyte (CTL) reactivity against hematologic malignancies after treatment by HLA-identical allogenic BMT. It induces cell recognition and lysis by CTL. Immunogenicity of most autosomal mHags results from single-nucleotide polymorphisms that cause amino-acid substitutions within epitopes, leading to the differential recognition of peptides between donor and recipient. In Homo sapiens (Human), this protein is Minor histocompatibility protein HMSD variant form (HMSD).